The chain runs to 687 residues: UvrABC system protein C (687 aa).

Residues 16–95 form the GIY-YIG domain; that stretch reads TEPGVYKFRD…IKKFDPHFNV (80 aa). Positions 208 to 243 constitute a UVR domain; sequence DSVVRRLTNEMISASEALDFEKAARKRDDLNAVRKI.

It belongs to the UvrC family. As to quaternary structure, interacts with UvrB in an incision complex.

The protein resides in the cytoplasm. In terms of biological role, the UvrABC repair system catalyzes the recognition and processing of DNA lesions. UvrC both incises the 5' and 3' sides of the lesion. The N-terminal half is responsible for the 3' incision and the C-terminal half is responsible for the 5' incision. The sequence is that of UvrABC system protein C from Corynebacterium diphtheriae (strain ATCC 700971 / NCTC 13129 / Biotype gravis).